An 871-amino-acid chain; its full sequence is DNA mismatch repair protein MutS (871 aa).

Gly625–Ser632 provides a ligand contact to ATP.

This sequence belongs to the DNA mismatch repair MutS family.

This protein is involved in the repair of mismatches in DNA. It is possible that it carries out the mismatch recognition step. This protein has a weak ATPase activity. The polypeptide is DNA mismatch repair protein MutS (Chlorobium limicola (strain DSM 245 / NBRC 103803 / 6330)).